Consider the following 347-residue polypeptide: Involucrin (347 aa).

2 disordered regions span residues 1-43 (MSQQ…LPAP) and 56-347 (PLED…RRSL). A compositionally biased stretch (polar residues) spans 27 to 36 (ADTQQEQVKQ). 2 stretches are compositionally biased toward low complexity: residues 70–114 (VPEQ…QQES) and 138–161 (DQQQ…QQES). Basic and acidic residues-rich tracts occupy residues 164–173 (QELHVDHHQQ) and 212–221 (QELHVDHHQQ). Low complexity-rich tracts occupy residues 222–241 (QQES…QQES) and 265–285 (DQQQ…QQQE). Positions 287 to 341 (QEDHQKAEHLEQEEAQREQQLKGQLEQEKKGVYQHLDQELTKRDEHLEKKGEHCW) are enriched in basic and acidic residues.

Belongs to the involucrin family. Directly or indirectly cross-linked to cornifelin (CNFN). In terms of processing, substrate of transglutaminase. Specific glutamines or lysines are cross-linked to keratins, desmoplakin and to inter involucrin molecules. Keratinocytes of epidermis and other stratified squamous epithelia.

The protein localises to the cytoplasm. Its function is as follows. Part of the insoluble cornified cell envelope (CE) of stratified squamous epithelia. This Sus scrofa (Pig) protein is Involucrin (IVL).